The sequence spans 235 residues: uncharacterized protein (235 aa).

Residues 82-221 (LAFKKFPPDP…DTGELIRESP (140 aa)) form the N-acetyltransferase domain.

Belongs to the acetyltransferase family.

The protein resides in the golgi apparatus membrane. It localises to the endoplasmic reticulum membrane. This is an uncharacterized protein from Schizosaccharomyces pombe (strain 972 / ATCC 24843) (Fission yeast).